The primary structure comprises 368 residues: Cystathionine beta-lyase (368 aa).

Lys221 is subject to N6-(pyridoxal phosphate)lysine.

It belongs to the class-II pyridoxal-phosphate-dependent aminotransferase family. MalY/PatB cystathionine beta-lyase subfamily. It depends on pyridoxal 5'-phosphate as a cofactor.

It carries out the reaction L,L-cystathionine + H2O = L-homocysteine + pyruvate + NH4(+). The catalysed reaction is an S-substituted L-cysteine + H2O = a thiol + pyruvate + NH4(+). The protein operates within amino-acid biosynthesis; L-methionine biosynthesis via de novo pathway; L-homocysteine from L-cystathionine: step 1/1. In terms of biological role, catalyzes the transformation of cystathionine to homocysteine. The polypeptide is Cystathionine beta-lyase (metC) (Corynebacterium glutamicum (Brevibacterium saccharolyticum)).